The following is an 87-amino-acid chain: MKHHAFMLWSLLIFSFHVLASSGHCSGLQQASWDIFIYDFGSKTPQPPTNTDKKQARQISSPSCPTTKPMMSAPVNDARKGNTFSRT.

Residues 1–20 form the signal peptide; sequence MKHHAFMLWSLLIFSFHVLA. Residues 46 to 87 form a disordered region; sequence QPPTNTDKKQARQISSPSCPTTKPMMSAPVNDARKGNTFSRT. The span at 57-66 shows a compositional bias: polar residues; it reads RQISSPSCPT.

Functionally, putative function in virulence. Could be involved in promoting S.typhimurium survival within macrophages. The sequence is that of Virulence protein PagD (pagD) from Salmonella typhimurium (strain LT2 / SGSC1412 / ATCC 700720).